Consider the following 107-residue polypeptide: Conantokin-R (107 aa).

The first 24 residues, 1-24 (MQLYTYLYLLVSLVTFYLILGTGT), serve as a signal peptide directing secretion. Positions 25–80 (LGHGGALTERRSTDATALKPEPVLLQKSSARSTDDNGNDRLTQMKRILKKRGNKAR) are excised as a propeptide. The disordered stretch occupies residues 26–64 (GHGGALTERRSTDATALKPEPVLLQKSSARSTDDNGNDR). A 4-carboxyglutamate mark is found at glutamate 83, glutamate 84, glutamate 91, and glutamate 95. Residues glutamate 91 and glutamate 95 each contribute to the a divalent metal cation site. Cysteines 101 and 105 form a disulfide.

Belongs to the conotoxin B superfamily. Requires Ca(2+) as cofactor. The cofactor is Mg(2+). As to expression, expressed by the venom duct.

It is found in the secreted. Functionally, conantokins inhibit N-methyl-D-aspartate (NMDA) receptors. This toxin is potent in the following order of preference: NR2B approximately NR2A/GRIN2A &gt; NR2C/GRIN2C &gt;&gt; NR2D/GRIN2D. Induces sleep-like symptoms in young mice. Is a highly potent anticonvulsant compound. This is Conantokin-R from Conus radiatus (Rayed cone).